Here is a 510-residue protein sequence, read N- to C-terminus: NAD(P)H-quinone oxidoreductase subunit 2 B, chloroplastic (510 aa).

The next 13 membrane-spanning stretches (helical) occupy residues 24 to 44 (LLLF…GLIL), 57 to 77 (IPWF…ALLF), 99 to 119 (IFQF…VEYI), 124 to 144 (MAIT…MFLC), 149 to 169 (LITI…LSGY), 183 to 203 (YLLM…WLYG), 227 to 247 (PGIL…LSLA), 295 to 315 (WHLL…LIAI), 323 to 343 (MLAY…IVGD), 354 to 374 (YMLF…LFGL), 395 to 415 (ALSL…AGFF), 428 to 448 (GLYF…YYYL), and 484 to 504 (MIVC…IIAI).

It belongs to the complex I subunit 2 family. NDH is composed of at least 16 different subunits, 5 of which are encoded in the nucleus.

The protein localises to the plastid. It is found in the chloroplast thylakoid membrane. The catalysed reaction is a plastoquinone + NADH + (n+1) H(+)(in) = a plastoquinol + NAD(+) + n H(+)(out). The enzyme catalyses a plastoquinone + NADPH + (n+1) H(+)(in) = a plastoquinol + NADP(+) + n H(+)(out). In terms of biological role, NDH shuttles electrons from NAD(P)H:plastoquinone, via FMN and iron-sulfur (Fe-S) centers, to quinones in the photosynthetic chain and possibly in a chloroplast respiratory chain. The immediate electron acceptor for the enzyme in this species is believed to be plastoquinone. Couples the redox reaction to proton translocation, and thus conserves the redox energy in a proton gradient. The chain is NAD(P)H-quinone oxidoreductase subunit 2 B, chloroplastic from Eucalyptus globulus subsp. globulus (Tasmanian blue gum).